Reading from the N-terminus, the 495-residue chain is NADH-ubiquinone oxidoreductase chain 4 (495 aa).

15 consecutive transmembrane segments (helical) span residues 9–29 (YFDL…LLFI), 39–59 (LIGL…WIQF), 89–109 (LSLF…LVGW), 118–138 (EYII…CMLD), 139–159 (LLLF…IIGV), 173–193 (FFLY…LILL), 214–234 (ILLW…VPVH), 245–265 (PTAG…YGFL), 272–292 (FPEA…IAII), 313–333 (VAHM…GIGG), 335–355 (ILLM…VGVL), 367–387 (YGGL…FTLA), 388–408 (NMSL…VGAF), 413–433 (LVAT…LWLY), and 457–477 (VFIF…PKVF).

Belongs to the complex I subunit 4 family.

The protein localises to the mitochondrion membrane. The catalysed reaction is a ubiquinone + NADH + 5 H(+)(in) = a ubiquinol + NAD(+) + 4 H(+)(out). Its function is as follows. Core subunit of the mitochondrial membrane respiratory chain NADH dehydrogenase (Complex I) that is believed to belong to the minimal assembly required for catalysis. Complex I functions in the transfer of electrons from NADH to the respiratory chain. The immediate electron acceptor for the enzyme is believed to be ubiquinone. The sequence is that of NADH-ubiquinone oxidoreductase chain 4 (ND4) from Triticum aestivum (Wheat).